We begin with the raw amino-acid sequence, 355 residues long: 3-dehydroquinate synthase (355 aa).

NAD(+) contacts are provided by residues 71–76, 105–109, 129–130, Lys142, and Lys151; these read EGEASK, GVVGD, and TS. Residues Glu184, His246, and His263 each contribute to the Zn(2+) site.

The protein belongs to the sugar phosphate cyclases superfamily. Dehydroquinate synthase family. Co(2+) is required as a cofactor. It depends on Zn(2+) as a cofactor. Requires NAD(+) as cofactor.

The protein resides in the cytoplasm. The catalysed reaction is 7-phospho-2-dehydro-3-deoxy-D-arabino-heptonate = 3-dehydroquinate + phosphate. Its pathway is metabolic intermediate biosynthesis; chorismate biosynthesis; chorismate from D-erythrose 4-phosphate and phosphoenolpyruvate: step 2/7. In terms of biological role, catalyzes the conversion of 3-deoxy-D-arabino-heptulosonate 7-phosphate (DAHP) to dehydroquinate (DHQ). This chain is 3-dehydroquinate synthase, found in Streptococcus sanguinis (strain SK36).